We begin with the raw amino-acid sequence, 215 residues long: Peptide methionine sulfoxide reductase MsrA (215 aa).

The active site involves cysteine 58.

This sequence belongs to the MsrA Met sulfoxide reductase family.

The enzyme catalyses L-methionyl-[protein] + [thioredoxin]-disulfide + H2O = L-methionyl-(S)-S-oxide-[protein] + [thioredoxin]-dithiol. It catalyses the reaction [thioredoxin]-disulfide + L-methionine + H2O = L-methionine (S)-S-oxide + [thioredoxin]-dithiol. Its function is as follows. Has an important function as a repair enzyme for proteins that have been inactivated by oxidation. Catalyzes the reversible oxidation-reduction of methionine sulfoxide in proteins to methionine. The sequence is that of Peptide methionine sulfoxide reductase MsrA from Pseudomonas syringae pv. tomato (strain ATCC BAA-871 / DC3000).